Consider the following 264-residue polypeptide: Large ribosomal subunit protein mL50 (264 aa).

The transit peptide at 1–75 (MSSLLKLHCI…EEGTNEASSQ (75 aa)) directs the protein to the mitochondrion.

It belongs to the mitochondrion-specific ribosomal protein mL50 family. As to quaternary structure, component of the mitochondrial large ribosomal subunit (mt-LSU). Mature yeast 74S mitochondrial ribosomes consist of a small (37S) and a large (54S) subunit. The 37S small subunit contains a 15S ribosomal RNA (15S mt-rRNA) and 34 different proteins. The 54S large subunit contains a 21S rRNA (21S mt-rRNA) and 46 different proteins.

The protein resides in the mitochondrion. In terms of biological role, component of the mitochondrial ribosome (mitoribosome), a dedicated translation machinery responsible for the synthesis of mitochondrial genome-encoded proteins, including at least some of the essential transmembrane subunits of the mitochondrial respiratory chain. The mitoribosomes are attached to the mitochondrial inner membrane and translation products are cotranslationally integrated into the membrane. The protein is Large ribosomal subunit protein mL50 (MRPL13) of Saccharomyces cerevisiae (strain ATCC 204508 / S288c) (Baker's yeast).